Here is a 300-residue protein sequence, read N- to C-terminus: Glycine--tRNA ligase alpha subunit (300 aa).

This sequence belongs to the class-II aminoacyl-tRNA synthetase family. As to quaternary structure, tetramer of two alpha and two beta subunits.

The protein localises to the cytoplasm. It catalyses the reaction tRNA(Gly) + glycine + ATP = glycyl-tRNA(Gly) + AMP + diphosphate. This is Glycine--tRNA ligase alpha subunit (glyQ) from Buchnera aphidicola subsp. Baizongia pistaciae (strain Bp).